The sequence spans 217 residues: UPF0502 protein VIBHAR_05349 (217 aa).

The protein belongs to the UPF0502 family.

The chain is UPF0502 protein VIBHAR_05349 from Vibrio campbellii (strain ATCC BAA-1116).